A 607-amino-acid chain; its full sequence is Matrix metalloproteinase-16 (607 aa).

Positions 1–31 (MILLAFSSGRRLDFVHRSGVFFFQTLLWILC) are cleaved as a signal peptide. Positions 32 to 119 (ATVCGTEQYF…SSKFNIRRKR (88 aa)) are excised as a propeptide. The N-linked (GlcNAc...) asparagine glycan is linked to Asn83. Residues 99–106 (PRCGVPDQ) carry the Cysteine switch motif. Residue Cys101 participates in Zn(2+) binding. Residues 120–564 (YALTGQKWQH…LDNTASTVKA (445 aa)) lie on the Extracellular side of the membrane. Asp183 is a Ca(2+) binding site. Zn(2+) is bound by residues His193 and Asp195. Ca(2+)-binding residues include Asp200, Gly201, Gly203, and Phe205. Residue His208 participates in Zn(2+) binding. Positions 215, 217, and 219 each coordinate Ca(2+). His221 is a Zn(2+) binding site. Positions 223 and 226 each coordinate Ca(2+). His246 contacts Zn(2+). Glu247 is an active-site residue. Residues His250 and His256 each coordinate Zn(2+). Positions 281–340 (DDLQGIQKIYGPPDKIPPPTRPLPTVPPHRSVPPADPRKNDRPKPPRPPTGRPSYPGAKP) are disordered. Residues 294-315 (DKIPPPTRPLPTVPPHRSVPPA) show a composition bias toward pro residues. 4 Hemopexin repeats span residues 340–388 (PNIC…WRGL), 389–434 (PPSI…GNGI), 436–484 (PHGI…KGIP), and 485–532 (ESPQ…FMGC). Residues Cys343 and Cys532 are joined by a disulfide bond. The chain crosses the membrane as a helical span at residues 565 to 585 (IAIVIPCILALCLLVLVYTVF). The Cytoplasmic portion of the chain corresponds to 586-607 (QFKRKGTPRHILYCKRSMQEWV).

The protein belongs to the peptidase M10A family. Interacts with CSPG4 through CSPG4 chondroitin sulfate glycosaminoglycan. The cofactor is Zn(2+). Requires Ca(2+) as cofactor. The precursor is cleaved by a furin endopeptidase. As to expression, strongly expressed in the lung, brain and smooth muscle cells. Weakly detectable in the spleen and liver and indetectable in the heart, skeletal muscle and kidney.

The protein localises to the cell membrane. It is found in the secreted. It localises to the extracellular space. Its subcellular location is the extracellular matrix. In terms of biological role, endopeptidase that degrades various components of the extracellular matrix, such as collagen type III and fibronectin. Activates progelatinase A. Involved in the matrix remodeling of blood vessels. The short isoform efficiently converts progelatinase A to the intermediate form but not to the mature one. It has no effect on type I, II, IV and V collagen. However, upon interaction with CSPG4, it may be involved in degradation and invasion of type I collagen by melanoma cells. The protein is Matrix metalloproteinase-16 (Mmp16) of Rattus norvegicus (Rat).